The following is a 193-amino-acid chain: Orotate phosphoribosyltransferase (193 aa).

117-125 contacts 5-phospho-alpha-D-ribose 1-diphosphate; it reads EDVVTTGLS. Orotate is bound by residues T121 and R149.

It belongs to the purine/pyrimidine phosphoribosyltransferase family. PyrE subfamily. As to quaternary structure, homodimer. The cofactor is Mg(2+).

It carries out the reaction orotidine 5'-phosphate + diphosphate = orotate + 5-phospho-alpha-D-ribose 1-diphosphate. It functions in the pathway pyrimidine metabolism; UMP biosynthesis via de novo pathway; UMP from orotate: step 1/2. Its function is as follows. Catalyzes the transfer of a ribosyl phosphate group from 5-phosphoribose 1-diphosphate to orotate, leading to the formation of orotidine monophosphate (OMP). In Erythrobacter litoralis (strain HTCC2594), this protein is Orotate phosphoribosyltransferase.